The sequence spans 463 residues: Chromosomal replication initiator protein DnaA (463 aa).

The interval 1-83 (MSTNQIILTD…LQLFQHYNNT (83 aa)) is domain I, interacts with DnaA modulators. Residues 83–124 (TIKSIEIITKELPGTTQTVTELPTKTFADIGSSELNSENIFS) are domain II. The segment at 125–343 (TLDVRFTFDN…GALNKVIAHS (219 aa)) is domain III, AAA+ region. Gly-171, Gly-173, Lys-174, and Thr-175 together coordinate ATP. A domain IV, binds dsDNA region spans residues 344–463 (NFTLKEITLE…IHLLMKILQN (120 aa)).

The protein belongs to the DnaA family. Oligomerizes as a right-handed, spiral filament on DNA at oriC.

It localises to the cytoplasm. Plays an essential role in the initiation and regulation of chromosomal replication. ATP-DnaA binds to the origin of replication (oriC) to initiate formation of the DNA replication initiation complex once per cell cycle. Binds the DnaA box (a 9 base pair repeat at the origin) and separates the double-stranded (ds)DNA. Forms a right-handed helical filament on oriC DNA; dsDNA binds to the exterior of the filament while single-stranded (ss)DNA is stabiized in the filament's interior. The ATP-DnaA-oriC complex binds and stabilizes one strand of the AT-rich DNA unwinding element (DUE), permitting loading of DNA polymerase. After initiation quickly degrades to an ADP-DnaA complex that is not apt for DNA replication. Binds acidic phospholipids. The polypeptide is Chromosomal replication initiator protein DnaA (Rickettsia africae (strain ESF-5)).